Here is an 862-residue protein sequence, read N- to C-terminus: DNA mismatch repair protein MutS (862 aa).

621-628 (GPNMGGKS) serves as a coordination point for ATP.

The protein belongs to the DNA mismatch repair MutS family.

Its function is as follows. This protein is involved in the repair of mismatches in DNA. It is possible that it carries out the mismatch recognition step. This protein has a weak ATPase activity. The polypeptide is DNA mismatch repair protein MutS (Vibrio cholerae serotype O1 (strain ATCC 39541 / Classical Ogawa 395 / O395)).